The sequence spans 371 residues: Geranylgeranyl transferase type-2 subunit alpha (371 aa).

PFTA repeat units follow at residues 45–79 (YSDE…NNYS), 92–126 (ILNQ…ELVK), 131–165 (NWKY…NMEL), 177–211 (INLD…KIYN), and 242–276 (LLKN…DDLF).

This sequence belongs to the protein prenyltransferase subunit alpha family. In terms of assembly, heterodimer of an alpha and a beta subunit.

The catalysed reaction is geranylgeranyl diphosphate + L-cysteinyl-[protein] = S-geranylgeranyl-L-cysteinyl-[protein] + diphosphate. Its function is as follows. Catalyzes the transfer of a geranyl-geranyl moiety from geranyl-geranyl pyrophosphate to proteins having the C-terminal -XCC or -XCXC, where both cysteines may become modified. Acts on YPT1 and SEC4. The sequence is that of Geranylgeranyl transferase type-2 subunit alpha (BET4) from Candida albicans (Yeast).